Reading from the N-terminus, the 202-residue chain is Putative 3-methyladenine DNA glycosylase (202 aa).

The protein belongs to the DNA glycosylase MPG family.

This Rhodopseudomonas palustris (strain BisB5) protein is Putative 3-methyladenine DNA glycosylase.